We begin with the raw amino-acid sequence, 115 residues long: NADH-ubiquinone oxidoreductase chain 3 (115 aa).

Transmembrane regions (helical) follow at residues 4-24, 55-75, and 84-104; these read ILTLFINITLSLCLISIAFWL, FFLVGITFLLFDLEIALLLPL, and SYLTMTVSFMLVSALALGLAY.

This sequence belongs to the complex I subunit 3 family. As to quaternary structure, core subunit of respiratory chain NADH dehydrogenase (Complex I) which is composed of 45 different subunits. Interacts with TMEM186. Interacts with TMEM242.

Its subcellular location is the mitochondrion inner membrane. The catalysed reaction is a ubiquinone + NADH + 5 H(+)(in) = a ubiquinol + NAD(+) + 4 H(+)(out). Functionally, core subunit of the mitochondrial membrane respiratory chain NADH dehydrogenase (Complex I) which catalyzes electron transfer from NADH through the respiratory chain, using ubiquinone as an electron acceptor. Essential for the catalytic activity of complex I. The chain is NADH-ubiquinone oxidoreductase chain 3 from Necromys lactens (Rufous-bellied bolo mouse).